A 1840-amino-acid polypeptide reads, in one-letter code: Collagen alpha-1(V) chain (1840 aa).

Residues 1–36 form the signal peptide; the sequence is MDVHTRWKDRLPVGPAAVPPLLLLLLLLWAPPQSRA. Residues 72 to 244 form the Laminin G-like domain; sequence DVAYRVSKDA…DYCEHYSPDC (173 aa). Positions 231–445 are nonhelical region; that stretch reads RAAYDYCEHY…MPANQDTIYE (215 aa). Sulfotyrosine is present on residues Tyr-234, Tyr-236, Tyr-240, Tyr-262, Tyr-263, and Tyr-271. Disordered regions lie at residues 242–523, 528–547, and 561–1576; these read PDCD…TMLM, FGGG…QESQ, and GPAG…EVIQ. A compositionally biased stretch (acidic residues) spans 258-268; it reads NPDEYYPEGDG. Composition is skewed to low complexity over residues 335–352 and 376–386; these read DYDY…PYED and TSTIITSNTSN. Residues 446-560 are interrupted collagenous region; it reads GIGGPRGEKG…ILQQARLALR (115 aa). The span at 472–487 shows a compositional bias: pro residues; that stretch reads PPGPEGPAGLPGPPGT. Low complexity predominate over residues 508 to 523; the sequence is LPGADGLPGPPGTMLM. The segment covering 561–572 has biased composition (low complexity); the sequence is GPAGPMGLTGRP. Residues 561 to 1572 form a triple-helical region region; it reads GPAGPMGLTG…GLPGPPGPPG (1012 aa). Residues Pro-572, Pro-578, and Pro-623 each carry the 4-hydroxyproline modification. Residue Lys-629 is modified to 5-hydroxylysine. Residue Pro-641 is modified to 4-hydroxyproline. Lys-644 carries the 5-hydroxylysine modification. Pro-650, Pro-656, Pro-659, Pro-677, and Pro-680 each carry 4-hydroxyproline. A compositionally biased stretch (low complexity) spans 673–688; it reads PRGLPGEPGPRGLLGP. A 3-hydroxyproline mark is found at Pro-682 and Pro-688. Over residues 689 to 698 the composition is skewed to pro residues; it reads KGPPGPPGPP. 4-hydroxyproline is present on residues Pro-692, Pro-698, and Pro-707. Lys-710 is modified (5-hydroxylysine). Pro-719, Pro-722, Pro-728, and Pro-734 each carry 4-hydroxyproline. Low complexity predominate over residues 724-743; that stretch reads QQGNPGAQGLPGPQGAIGPP. Lys-746 is modified (5-hydroxylysine). Residues 749–758 are compositionally biased toward low complexity; it reads LGKPGLPGMP. 4-hydroxyproline occurs at positions 752, 758, 764, 767, and 773. Residue Lys-776 is modified to 5-hydroxylysine. 2 positions are modified to 4-hydroxyproline: Pro-782 and Pro-791. 5-hydroxylysine is present on residues Lys-797, Lys-806, Lys-809, and Lys-812. A 4-hydroxyproline modification is found at Pro-818. Lys-821 bears the 5-hydroxylysine mark. 4-hydroxyproline is present on Pro-836. Positions 839–848 are enriched in basic and acidic residues; sequence RGEDGPEGPK. 5-hydroxylysine occurs at positions 848 and 866. Pro-872, Pro-875, and Pro-878 each carry 4-hydroxyproline. At Lys-884 the chain carries 5-hydroxylysine. 4-hydroxyproline is present on residues Pro-890 and Pro-893. A 5-hydroxylysine modification is found at Lys-899. 2 positions are modified to 4-hydroxyproline: Pro-905 and Pro-908. The span at 910-919 shows a compositional bias: low complexity; sequence PRGQRGPTGP. Pro-932 and Pro-947 each carry 4-hydroxyproline. Composition is skewed to low complexity over residues 973–992 and 1001–1013; these read KDGL…QGKT and VGPQ…TGPM. Pro-1019, Pro-1022, Pro-1025, and Pro-1031 each carry 4-hydroxyproline. Low complexity predominate over residues 1090–1106; that stretch reads SPGERGPAGAAGPIGIP. The span at 1108–1117 shows a compositional bias: pro residues; the sequence is RPGPQGPPGP. Residues Pro-1223 and Pro-1226 each carry the 4-hydroxyproline modification. Residues 1261–1270 show a composition bias toward low complexity; sequence PSGAPGADGP. Positions 1296 to 1305 are enriched in gly residues; the sequence is GLPGEGGPLG. 2 stretches are compositionally biased toward pro residues: residues 1382–1400 and 1456–1471; these read TGEP…PGPA and SPGP…PPGL. 4-hydroxyproline occurs at positions 1469 and 1472. Over residues 1487–1496 the composition is skewed to low complexity; it reads PGLIGLIGPP. Residues 1528–1543 are compositionally biased toward pro residues; it reads PLGPPGPPGLPGPPGP. Positions 1544–1556 are enriched in low complexity; the sequence is KGAKGSSGPTGPK. The interval 1573-1607 is nonhelical region; that stretch reads EVIQPLPIQASRTRRNIDASQLLDDGAGESYLDYA. Sulfotyrosine is present on residues Tyr-1603 and Tyr-1606. The Fibrillar collagen NC1 domain occupies 1611–1839; the sequence is EEIFGSLNSL…GFEVGPACFL (229 aa).

It belongs to the fibrillar collagen family. In terms of assembly, trimers of two alpha 1(V) and one alpha 2(V) chains in most tissues and trimers of one alpha 1(V), one alpha 2(V), and one alpha 3(V) chains in placenta. Interacts with CSPG4. Hydroxylation on proline residues within the sequence motif, GXPG, is most likely to be 4-hydroxy as this fits the requirement for 4-hydroxylation in vertebrates. Post-translationally, sulfated on 40% of tyrosines. As to expression, ubiquitously expressed.

It localises to the secreted. Its subcellular location is the extracellular space. The protein resides in the extracellular matrix. Its function is as follows. Type V collagen is a member of group I collagen (fibrillar forming collagen). It is a minor connective tissue component of nearly ubiquitous distribution. Type V collagen binds to DNA, heparan sulfate, thrombospondin, heparin, and insulin. In Cricetulus longicaudatus (Long-tailed dwarf hamster), this protein is Collagen alpha-1(V) chain (COL5A1).